A 192-amino-acid chain; its full sequence is Glycerol-3-phosphate acyltransferase (192 aa).

A run of 5 helical transmembrane segments spans residues 4 to 24 (FAII…DVVI), 48 to 68 (LVLV…WVGY), 74 to 94 (YFEL…PIFF), 101 to 121 (GVAT…GSML), and 125 to 145 (LLIF…ALIL).

It belongs to the PlsY family. In terms of assembly, probably interacts with PlsX.

The protein localises to the cell inner membrane. It catalyses the reaction an acyl phosphate + sn-glycerol 3-phosphate = a 1-acyl-sn-glycero-3-phosphate + phosphate. The protein operates within lipid metabolism; phospholipid metabolism. Functionally, catalyzes the transfer of an acyl group from acyl-phosphate (acyl-PO(4)) to glycerol-3-phosphate (G3P) to form lysophosphatidic acid (LPA). This enzyme utilizes acyl-phosphate as fatty acyl donor, but not acyl-CoA or acyl-ACP. This chain is Glycerol-3-phosphate acyltransferase, found in Histophilus somni (strain 129Pt) (Haemophilus somnus).